We begin with the raw amino-acid sequence, 378 residues long: Chaperone protein DnaJ (378 aa).

One can recognise a J domain in the interval 5 to 72 (DFYEVLGVPK…QKRAAYDQFG (68 aa)). Residues 138 to 216 (GKEAQIRIPS…CHGQGKVKKQ (79 aa)) form a CR-type zinc finger. Zn(2+) is bound by residues C151, C154, C168, C171, C190, C193, C204, and C207. CXXCXGXG motif repeat units follow at residues 151–158 (CETCHGSG), 168–175 (CTTCSGTG), 190–197 (CPHCRGTG), and 204–211 (CVTCHGQG). The segment at 354–378 (SLKKGGGKHSPSGESWTDRLKNLFT) is disordered. Over residues 369–378 (WTDRLKNLFT) the composition is skewed to basic and acidic residues.

This sequence belongs to the DnaJ family. Homodimer. The cofactor is Zn(2+).

The protein resides in the cytoplasm. Its function is as follows. Participates actively in the response to hyperosmotic and heat shock by preventing the aggregation of stress-denatured proteins and by disaggregating proteins, also in an autonomous, DnaK-independent fashion. Unfolded proteins bind initially to DnaJ; upon interaction with the DnaJ-bound protein, DnaK hydrolyzes its bound ATP, resulting in the formation of a stable complex. GrpE releases ADP from DnaK; ATP binding to DnaK triggers the release of the substrate protein, thus completing the reaction cycle. Several rounds of ATP-dependent interactions between DnaJ, DnaK and GrpE are required for fully efficient folding. Also involved, together with DnaK and GrpE, in the DNA replication of plasmids through activation of initiation proteins. The protein is Chaperone protein DnaJ of Paracidovorax citrulli (strain AAC00-1) (Acidovorax citrulli).